A 513-amino-acid polypeptide reads, in one-letter code: ATP synthase subunit alpha (513 aa).

Residue 169–176 participates in ATP binding; the sequence is GDRQTGKT.

It belongs to the ATPase alpha/beta chains family. As to quaternary structure, F-type ATPases have 2 components, CF(1) - the catalytic core - and CF(0) - the membrane proton channel. CF(1) has five subunits: alpha(3), beta(3), gamma(1), delta(1), epsilon(1). CF(0) has three main subunits: a(1), b(2) and c(9-12). The alpha and beta chains form an alternating ring which encloses part of the gamma chain. CF(1) is attached to CF(0) by a central stalk formed by the gamma and epsilon chains, while a peripheral stalk is formed by the delta and b chains.

It localises to the cell inner membrane. It catalyses the reaction ATP + H2O + 4 H(+)(in) = ADP + phosphate + 5 H(+)(out). Its function is as follows. Produces ATP from ADP in the presence of a proton gradient across the membrane. The alpha chain is a regulatory subunit. The chain is ATP synthase subunit alpha from Halorhodospira halophila (strain DSM 244 / SL1) (Ectothiorhodospira halophila (strain DSM 244 / SL1)).